A 31-amino-acid chain; its full sequence is Cytochrome b6-f complex subunit 6 (31 aa).

Residues 4–24 traverse the membrane as a helical segment; sequence LLSYFGLLLAALISTLVLFIG.

This sequence belongs to the PetL family. The 4 large subunits of the cytochrome b6-f complex are cytochrome b6, subunit IV (17 kDa polypeptide, PetD), cytochrome f and the Rieske protein, while the 4 small subunits are PetG, PetL, PetM and PetN. The complex functions as a dimer.

It is found in the plastid. It localises to the chloroplast thylakoid membrane. Component of the cytochrome b6-f complex, which mediates electron transfer between photosystem II (PSII) and photosystem I (PSI), cyclic electron flow around PSI, and state transitions. PetL is important for photoautotrophic growth as well as for electron transfer efficiency and stability of the cytochrome b6-f complex. This Psilotum nudum (Whisk fern) protein is Cytochrome b6-f complex subunit 6.